The sequence spans 70 residues: U2-agatoxin-Ao1m (70 aa).

The signal sequence occupies residues 1-20; the sequence is MRAIISLFLISAMVFSMIQA. Residues 21 to 34 constitute a propeptide that is removed on maturation; sequence VPEEXGLQLSEDER. 3 disulfides stabilise this stretch: Cys37/Cys53, Cys44/Cys58, and Cys52/Cys68. At Leu69 the chain carries Leucine amide.

This sequence belongs to the neurotoxin 01 (U2-agtx) family. In terms of tissue distribution, expressed by the venom gland.

It localises to the secreted. Its function is as follows. Insect active toxin causing rapid but reversible paralysis in crickets. No activity shown in mammals. Does not show effect on mammalian voltage-gated calcium channels. This Agelena orientalis (Funnel-web spider) protein is U2-agatoxin-Ao1m.